Consider the following 221-residue polypeptide: Large ribosomal subunit protein uL4 (221 aa).

Positions 48 to 77 (TASTKTRGEVSGGGRKPWIQKHTGRARQGS) are disordered.

Belongs to the universal ribosomal protein uL4 family. Part of the 50S ribosomal subunit.

Its function is as follows. One of the primary rRNA binding proteins, this protein initially binds near the 5'-end of the 23S rRNA. It is important during the early stages of 50S assembly. It makes multiple contacts with different domains of the 23S rRNA in the assembled 50S subunit and ribosome. Forms part of the polypeptide exit tunnel. The protein is Large ribosomal subunit protein uL4 of Thermosipho africanus (strain TCF52B).